The sequence spans 103 residues: Small ribosomal subunit protein uS10 (103 aa).

Residues 35–59 are disordered; the sequence is LSGPVPLPTKTLEVPSRKSPDGEGT.

This sequence belongs to the universal ribosomal protein uS10 family. In terms of assembly, part of the 30S ribosomal subunit.

In terms of biological role, involved in the binding of tRNA to the ribosomes. This is Small ribosomal subunit protein uS10 (rps10) from Haloarcula marismortui (strain ATCC 43049 / DSM 3752 / JCM 8966 / VKM B-1809) (Halobacterium marismortui).